Reading from the N-terminus, the 348-residue chain is S-adenosylmethionine:tRNA ribosyltransferase-isomerase (348 aa).

This sequence belongs to the QueA family. Monomer.

It is found in the cytoplasm. It catalyses the reaction 7-aminomethyl-7-carbaguanosine(34) in tRNA + S-adenosyl-L-methionine = epoxyqueuosine(34) in tRNA + adenine + L-methionine + 2 H(+). Its pathway is tRNA modification; tRNA-queuosine biosynthesis. Functionally, transfers and isomerizes the ribose moiety from AdoMet to the 7-aminomethyl group of 7-deazaguanine (preQ1-tRNA) to give epoxyqueuosine (oQ-tRNA). The protein is S-adenosylmethionine:tRNA ribosyltransferase-isomerase of Polynucleobacter necessarius subsp. necessarius (strain STIR1).